Here is a 228-residue protein sequence, read N- to C-terminus: Ribose-5-phosphate isomerase A (228 aa).

Substrate-binding positions include 32-35 (TGST), 85-88 (DGAD), and 98-101 (KGGG). Glu107 serves as the catalytic Proton acceptor. A substrate-binding site is contributed by Lys125.

It belongs to the ribose 5-phosphate isomerase family. Homodimer.

The catalysed reaction is aldehydo-D-ribose 5-phosphate = D-ribulose 5-phosphate. It functions in the pathway carbohydrate degradation; pentose phosphate pathway; D-ribose 5-phosphate from D-ribulose 5-phosphate (non-oxidative stage): step 1/1. In terms of biological role, catalyzes the reversible conversion of ribose-5-phosphate to ribulose 5-phosphate. The polypeptide is Ribose-5-phosphate isomerase A (Cupriavidus necator (strain ATCC 17699 / DSM 428 / KCTC 22496 / NCIMB 10442 / H16 / Stanier 337) (Ralstonia eutropha)).